We begin with the raw amino-acid sequence, 241 residues long: Tetraspanin-1 (241 aa).

Residues 1 to 11 lie on the Cytoplasmic side of the membrane; that stretch reads MQCFSFIKTMM. Residues 12–32 form a helical membrane-spanning segment; it reads ILFNLLIFLCGAALLAVGIWV. Residues 33–52 lie on the Extracellular side of the membrane; sequence SIDGASFLKIFGPLSSSAMQ. The chain crosses the membrane as a helical span at residues 53 to 73; sequence FVNVGYFLIAAGVVVFALGFL. Residues 74 to 88 lie on the Cytoplasmic side of the membrane; sequence GCYGAKTESKCALVT. The helical transmembrane segment at 89–109 threads the bilayer; that stretch reads FFFILLLIFIAEVAAAVVALV. At 110–211 the chain is on the extracellular side; the sequence is YTTMAEHFLT…NQLLYDIRTN (102 aa). Residues Asn-141, Asn-154, Asn-178, and Asn-184 are each glycosylated (N-linked (GlcNAc...) asparagine). The chain crosses the membrane as a helical span at residues 212–232; that stretch reads AVTVGGVAAGIGGLELAAMIV. Over 233-241 the chain is Cytoplasmic; that stretch reads SMYLYCNLQ.

Belongs to the tetraspanin (TM4SF) family. Interacts with SLC19A2. Interacts with NTRK1/TRKA.

Its subcellular location is the cell membrane. The protein localises to the lysosome membrane. Functionally, structural component of specialized membrane microdomains known as tetraspanin-enriched microdomains (TERMs), which act as platforms for receptor clustering and signaling. Participates thereby in diverse biological functions such as cell signal transduction, adhesion, migration and protein trafficking. Regulates neuronal differentiation in response to NGF by facilitating NGF-mediated activation of NTRK1/TRKA receptor tyrosine kinase and subsequent downstream signaling pathways. Plays a role in the inhibition of TNFalpha-induced apoptosis. Mechanistically, inhibits the NF-kappa-B signaling pathway by blocking phosphorylation of CHUK. Also promotes the stability of the thiamine transporter 1/SLC19A2 in intestinal epithelial cells leading to an increase of thiamine uptake process. The protein is Tetraspanin-1 (TSPAN1) of Homo sapiens (Human).